Consider the following 65-residue polypeptide: uncharacterized protein (65 aa).

At M1–Y20 the chain is on the cytoplasmic side. Residues S21–I43 traverse the membrane as a helical segment. Over H44 to R65 the chain is Extracellular.

It is found in the host membrane. This is an uncharacterized protein from Acidianus sp. F28 (AFV-2).